The sequence spans 241 residues: Fatty acid metabolism regulator protein (241 aa).

In terms of domain architecture, HTH gntR-type spans 6-74 (KGPASFAEKY…HGKPTRVNNF (69 aa)). Residues 34-53 (ERELSELIGVTRTTLREVLQ) constitute a DNA-binding region (H-T-H motif).

Homodimer.

It localises to the cytoplasm. Its function is as follows. Multifunctional regulator of fatty acid metabolism. This is Fatty acid metabolism regulator protein from Shewanella sp. (strain ANA-3).